The sequence spans 354 residues: (R,R)-butanediol dehydrogenase (354 aa).

The 341-residue stretch at 10-350 folds into the Enoyl reductase (ER) domain; that stretch reads GDIRIEDIPE…NNESAVKIIV (341 aa). Zn(2+)-binding residues include cysteine 37, histidine 71, and glutamate 157.

This sequence belongs to the zinc-containing alcohol dehydrogenase family. Zn(2+) serves as cofactor.

It catalyses the reaction (R,R)-butane-2,3-diol + NAD(+) = (R)-acetoin + NADH + H(+). It carries out the reaction (S)-acetoin + NAD(+) = diacetyl + NADH + H(+). In terms of biological role, NAD-dependent butanediol dehydrogenase which catalyzes the oxidation of (R,R)-butane-2,3-diol to (3R)-acetoin and of meso-butane-2,3-diol to (3S)-acetoin. Preferentially oxidizes (R,R)-butane-2,3-diol, with a catalytic efficiency approximately fourfold higher than with meso-butane-2,3-diol. Shows a very low activity with (S,S)-butane-2,3-diol. Can also catalyze the reduction of (3R/3S)-acetoin and diacetyl in the presence of NADH. The polypeptide is (R,R)-butanediol dehydrogenase (Neisseria gonorrhoeae (strain ATCC 700825 / FA 1090)).